The primary structure comprises 280 residues: Large ribosomal subunit protein uL2 (280 aa).

Disordered stretches follow at residues 27–59 (STPEKSLVRPLHGRGGRNAHGRITTRHKGGGHK) and 225–280 (VMNP…KHSR). Composition is skewed to basic residues over residues 37-59 (LHGRGGRNAHGRITTRHKGGGHK) and 268-280 (IVRRRRTGKKHSR).

It belongs to the universal ribosomal protein uL2 family. Part of the 50S ribosomal subunit. Forms a bridge to the 30S subunit in the 70S ribosome.

Its function is as follows. One of the primary rRNA binding proteins. Required for association of the 30S and 50S subunits to form the 70S ribosome, for tRNA binding and peptide bond formation. It has been suggested to have peptidyltransferase activity; this is somewhat controversial. Makes several contacts with the 16S rRNA in the 70S ribosome. In Mycobacterium bovis (strain ATCC BAA-935 / AF2122/97), this protein is Large ribosomal subunit protein uL2.